We begin with the raw amino-acid sequence, 147 residues long: Lipoprotein YafY (147 aa).

The N-terminal stretch at 1 to 20 (MKRKTLPLLALVATTLFLIA) is a signal peptide. A lipid anchor (N-palmitoyl cysteine) is attached at Cys21. Cys21 carries S-diacylglycerol cysteine lipidation.

It to E.coli YfjS.

It localises to the cell inner membrane. Its function is as follows. When overproduced strongly induces degP through the activation of the two-component envelope stress response system CpxA/CpxR. This chain is Lipoprotein YafY (yafY), found in Escherichia coli (strain K12).